Reading from the N-terminus, the 180-residue chain is Nucleoside triphosphate/diphosphate phosphatase (180 aa).

Arg-26 serves as the catalytic Proton donor. Asn-90, Asp-106, Asp-108, Asp-110, Asp-123, and Glu-126 together coordinate Mg(2+).

The protein belongs to the Ntdp family. Mg(2+) is required as a cofactor.

It carries out the reaction a ribonucleoside 5'-triphosphate + H2O = a ribonucleoside 5'-diphosphate + phosphate + H(+). The enzyme catalyses a ribonucleoside 5'-diphosphate + H2O = a ribonucleoside 5'-phosphate + phosphate + H(+). In terms of biological role, has nucleoside phosphatase activity towards nucleoside triphosphates and nucleoside diphosphates. The protein is Nucleoside triphosphate/diphosphate phosphatase of Staphylococcus haemolyticus (strain JCSC1435).